The chain runs to 450 residues: UDP-N-acetylmuramoylalanine--D-glutamate ligase (450 aa).

An ATP-binding site is contributed by 116–122 (GSNGKTT).

This sequence belongs to the MurCDEF family.

Its subcellular location is the cytoplasm. It catalyses the reaction UDP-N-acetyl-alpha-D-muramoyl-L-alanine + D-glutamate + ATP = UDP-N-acetyl-alpha-D-muramoyl-L-alanyl-D-glutamate + ADP + phosphate + H(+). It participates in cell wall biogenesis; peptidoglycan biosynthesis. Functionally, cell wall formation. Catalyzes the addition of glutamate to the nucleotide precursor UDP-N-acetylmuramoyl-L-alanine (UMA). The sequence is that of UDP-N-acetylmuramoylalanine--D-glutamate ligase from Dechloromonas aromatica (strain RCB).